A 938-amino-acid polypeptide reads, in one-letter code: Isoleucine--tRNA ligase (938 aa).

The short motif at 58 to 68 (PYANGSIHIGH) is the 'HIGH' region element. Residue Glu561 coordinates L-isoleucyl-5'-AMP. The 'KMSKS' region motif lies at 602–606 (KMSKS). An ATP-binding site is contributed by Lys605. Zn(2+)-binding residues include Cys901, Cys904, Cys921, and Cys924.

It belongs to the class-I aminoacyl-tRNA synthetase family. IleS type 1 subfamily. Monomer. Zn(2+) serves as cofactor.

The protein resides in the cytoplasm. It carries out the reaction tRNA(Ile) + L-isoleucine + ATP = L-isoleucyl-tRNA(Ile) + AMP + diphosphate. Catalyzes the attachment of isoleucine to tRNA(Ile). As IleRS can inadvertently accommodate and process structurally similar amino acids such as valine, to avoid such errors it has two additional distinct tRNA(Ile)-dependent editing activities. One activity is designated as 'pretransfer' editing and involves the hydrolysis of activated Val-AMP. The other activity is designated 'posttransfer' editing and involves deacylation of mischarged Val-tRNA(Ile). In Baumannia cicadellinicola subsp. Homalodisca coagulata, this protein is Isoleucine--tRNA ligase.